Reading from the N-terminus, the 394-residue chain is Elongation factor Tu (394 aa).

The tr-type G domain maps to 10-204 (KPHVNVGTIG…ALDSYIPEPE (195 aa)). Residues 19–26 (GHVDHGKT) are G1. 19–26 (GHVDHGKT) is a binding site for GTP. Position 26 (threonine 26) interacts with Mg(2+). Positions 60–64 (GITIN) are G2. Residues 81-84 (DCPG) form a G3 region. Residues 81 to 85 (DCPGH) and 136 to 139 (NKCD) each bind GTP. The segment at 136–139 (NKCD) is G4. Positions 174-176 (SAL) are G5.

It belongs to the TRAFAC class translation factor GTPase superfamily. Classic translation factor GTPase family. EF-Tu/EF-1A subfamily. As to quaternary structure, monomer.

It is found in the cytoplasm. The catalysed reaction is GTP + H2O = GDP + phosphate + H(+). Its function is as follows. GTP hydrolase that promotes the GTP-dependent binding of aminoacyl-tRNA to the A-site of ribosomes during protein biosynthesis. The chain is Elongation factor Tu from Sodalis glossinidius (strain morsitans).